The chain runs to 923 residues: Phosphoenolpyruvate carboxylase (923 aa).

Active-site residues include histidine 149 and lysine 585.

Belongs to the PEPCase type 1 family. Mg(2+) serves as cofactor.

It carries out the reaction oxaloacetate + phosphate = phosphoenolpyruvate + hydrogencarbonate. Functionally, forms oxaloacetate, a four-carbon dicarboxylic acid source for the tricarboxylic acid cycle. This chain is Phosphoenolpyruvate carboxylase, found in Nocardia farcinica (strain IFM 10152).